Reading from the N-terminus, the 505-residue chain is Catalase (505 aa).

Residues 1 to 25 form a disordered region; sequence MSQQDKKLTGVFGHPVSDRENSMTA. Active-site residues include His56 and Asn129. Tyr339 is a binding site for heme.

It belongs to the catalase family. In terms of assembly, homodimer. Heme is required as a cofactor.

The enzyme catalyses 2 H2O2 = O2 + 2 H2O. Decomposes hydrogen peroxide into water and oxygen; serves to protect cells from the toxic effects of hydrogen peroxide. This is Catalase (katA) from Staphylococcus aureus (strain MSSA476).